Here is an 802-residue protein sequence, read N- to C-terminus: Copper-exporting P-type ATPase (802 aa).

HMA domains lie at 5 to 70 and 72 to 138; these read KKTT…YGVA and ETVE…YDAS. Cu(+) is bound by residues Cys-16, Cys-19, Cys-83, and Cys-86. Transmembrane regions (helical) follow at residues 161–181, 192–212, 224–244, 256–276, 411–431, and 438–458; these read LIIS…HLFN, WFQF…FYVG, MDVL…YEMI, LYFE…YLEA, YFVP…ITLV, and PALV…LGLA. Asp-495 (4-aspartylphosphate intermediate) is an active-site residue. Asp-690 and Asp-694 together coordinate Mg(2+). 2 helical membrane-spanning segments follow: residues 748-767 and 771-790; these read LFWA…LGLL and VAGA…ALRL.

This sequence belongs to the cation transport ATPase (P-type) (TC 3.A.3) family. Type IB subfamily.

It is found in the cell membrane. It catalyses the reaction Cu(+)(in) + ATP + H2O = Cu(+)(out) + ADP + phosphate + H(+). Involved in copper export. The chain is Copper-exporting P-type ATPase (copA) from Staphylococcus aureus (strain bovine RF122 / ET3-1).